An 83-amino-acid polypeptide reads, in one-letter code: MAVSTEELEATVQEVLGRLKSHQFFQSTWDTVAFIVFLTFMGTVLLLLLLVVAHCCCCSSPGPRRESPRKERPKGVDNLALEP.

The helical transmembrane segment at V32 to V52 threads the bilayer. The segment at S60 to P83 is disordered. The span at P63–G75 shows a compositional bias: basic and acidic residues.

As to quaternary structure, interacts with CANX and DDOST. Interacts with SQLE; this interaction modulates lipid droplet formation.

It is found in the membrane. The protein resides in the late endosome. May modulate lipid droplet formation throught interaction with SQLE. The polypeptide is Small integral membrane protein 22 (Homo sapiens (Human)).